Consider the following 30-residue polypeptide: GLKDMIKNLAKEAAVKLAGAVINKFSPQPQ.

As to expression, expressed by the skin glands.

The protein resides in the secreted. Its function is as follows. Probably has antibacterial activity. The polypeptide is Nattererin-1 (Physalaemus nattereri (Cuyaba dwarf frog)).